We begin with the raw amino-acid sequence, 440 residues long: Protein root UVB sensitive 3 (440 aa).

3 helical membrane passes run 109–129 (IGATFQWFLRDFTGMLGGILF), 154–174 (IGMLMDLLSPLFPSAFIVVVC), and 232–252 (FTSGNPMAIWLSFLSLTVFHM).

Belongs to the RUS1 family.

Its subcellular location is the membrane. The sequence is that of Protein root UVB sensitive 3 from Arabidopsis thaliana (Mouse-ear cress).